A 138-amino-acid chain; its full sequence is ATP synthase epsilon chain, chloroplastic (138 aa).

Belongs to the ATPase epsilon chain family. In terms of assembly, F-type ATPases have 2 components, CF(1) - the catalytic core - and CF(0) - the membrane proton channel. CF(1) has five subunits: alpha(3), beta(3), gamma(1), delta(1), epsilon(1). CF(0) has three main subunits: a, b and c.

It localises to the plastid. It is found in the chloroplast thylakoid membrane. In terms of biological role, produces ATP from ADP in the presence of a proton gradient across the membrane. In Galdieria sulphuraria (Red alga), this protein is ATP synthase epsilon chain, chloroplastic.